The chain runs to 486 residues: LON peptidase N-terminal domain and RING finger protein C14F5.10c (486 aa).

The RING-type zinc finger occupies 169–207; it reads CQICFGMLYDPVVSPCGHTFCGPCLMQALTQSPQCPTCR. The 223-residue stretch at 250–472 folds into the Lon N-terminal domain; the sequence is ESWLPLFISM…LVLIWLTQLQ (223 aa).

The polypeptide is LON peptidase N-terminal domain and RING finger protein C14F5.10c (Schizosaccharomyces pombe (strain 972 / ATCC 24843) (Fission yeast)).